Consider the following 620-residue polypeptide: MTSSKMEQRSLLCFLYLLLLFNFTLRVAGNAEGDALTQLKNSLSSGDPANNVLQSWDATLVTPCTWFHVTCNPENKVTRVDLGNAKLSGKLVPELGQLLNLQYLELYSNNITGEIPEELGDLVELVSLDLYANSISGPIPSSLGKLGKLRFLRLNNNSLSGEIPMTLTSVQLQVLDISNNRLSGDIPVNGSFSLFTPISFANNSLTDLPEPPPTSTSPTPPPPSGGQMTAAIAGGVAAGAALLFAVPAIAFAWWLRRKPQDHFFDVPAEEDPEVHLGQLKRFTLRELLVATDNFSNKNVLGRGGFGKVYKGRLADGNLVAVKRLKEERTKGGELQFQTEVEMISMAVHRNLLRLRGFCMTPTERLLVYPYMANGSVASCLRERPEGNPALDWPKRKHIALGSARGLAYLHDHCDQKIIHRDVKAANILLDEEFEAVVGDFGLAKLMNYNDSHVTTAVRGTIGHIAPEYLSTGKSSEKTDVFGYGVMLLELITGQKAFDLARLANDDDIMLLDWVKEVLKEKKLESLVDAELEGKYVETEVEQLIQMALLCTQSSAMERPKMSEVVRMLEGDGLAERWEEWQKEEMPIHDFNYQAYPHAGTDWLIPYSNSLIENDYPSGPR.

The first 33 residues, 1-33 (MTSSKMEQRSLLCFLYLLLLFNFTLRVAGNAEG), serve as a signal peptide directing secretion. The Extracellular portion of the chain corresponds to 34-234 (DALTQLKNSL…GGQMTAAIAG (201 aa)). LRR repeat units follow at residues 100–122 (NLQYLELYSNNITGEIPEELGDL), 124–146 (ELVSLDLYANSISGPIPSSLGKL), 148–170 (KLRFLRLNNNSLSGEIPMTLTSV), 171–193 (QLQVLDISNNRLSGDIPVNGSFS), and 194–215 (LFTPISFANNSLTDLPEPPPTS). A glycan (N-linked (GlcNAc...) asparagine) is linked at asparagine 110. N-linked (GlcNAc...) asparagine glycosylation is found at asparagine 156, asparagine 189, and asparagine 202. A disordered region spans residues 205–227 (LTDLPEPPPTSTSPTPPPPSGGQ). Over residues 209–224 (PEPPPTSTSPTPPPPS) the composition is skewed to pro residues. Residues 235–255 (GVAAGAALLFAVPAIAFAWWL) form a helical membrane-spanning segment. The Cytoplasmic portion of the chain corresponds to 256–620 (RRKPQDHFFD…IENDYPSGPR (365 aa)). Threonine 291 bears the Phosphothreonine mark. Residues 294–591 (FSNKNVLGRG…KEEMPIHDFN (298 aa)) enclose the Protein kinase domain. Residue serine 295 is modified to Phosphoserine. ATP contacts are provided by residues 300-308 (LGRGGFGKV) and lysine 322. Residues serine 375 and serine 378 each carry the phosphoserine modification. The Proton acceptor role is filled by aspartate 421. Residues threonine 454, threonine 455, and threonine 460 each carry the phosphothreonine modification. A Phosphotyrosine modification is found at tyrosine 468. A Phosphoserine modification is found at serine 470. Residue threonine 471 is modified to Phosphothreonine. Residue serine 475 is modified to Phosphoserine. Threonine 551 carries the phosphothreonine modification.

Belongs to the protein kinase superfamily. Ser/Thr protein kinase family. Interacts with the EF-Tu receptor EFR and FLS2 in a specific ligand-induced manner. Interacts with TMK4/BARK1. Interacts with ERECTA in a EPF2-induced manner. Interacts with ERL1 in a EPF1-induced manner. Interacts with TMM. Forms a complex with MIK2 in response to SCOOP12 perception. Autophosphorylated on Thr and Tyr residues.

It is found in the cell membrane. It carries out the reaction L-seryl-[protein] + ATP = O-phospho-L-seryl-[protein] + ADP + H(+). The enzyme catalyses L-threonyl-[protein] + ATP = O-phospho-L-threonyl-[protein] + ADP + H(+). The catalysed reaction is L-tyrosyl-[protein] + ATP = O-phospho-L-tyrosyl-[protein] + ADP + H(+). Its function is as follows. Dual specificity kinase acting on both serine/threonine- and tyrosine-containing substrates. Positively regulates the BR-dependent plant growth pathway and negatively regulates the BR-independent cell-death pathway. Required during SCOOP small peptides (e.g. SCOOP10 and SCOOP12) perception and signaling; associates with MIK2 as a coreceptor upon MIK2 perception of SCOOP peptides, and relays the signaling through the activation of receptor-like cytosolic kinases (RLCKs) BIK1 and PBL1. This chain is Somatic embryogenesis receptor kinase 4, found in Arabidopsis thaliana (Mouse-ear cress).